A 323-amino-acid chain; its full sequence is RNA polymerase II holoenzyme cyclin-like subunit (323 aa).

The Cyclin N-terminal domain maps to 45-176 (DSKQNGIEQS…LLEELESYLI (132 aa)).

The protein belongs to the cyclin family. Cyclin C subfamily. In terms of assembly, component of the SRB8-11 complex which consists of SRB8, SSN2/SRB9, SSN3/SRB10 and SSN8/SRB11. The SRB8-11 complex associates with the Mediator complex. The SSN3/SRB10 and SSN8/SRB11 kinase-cyclin pair also associate with the RNA polymerase II holoenzyme. Interacts with ASK10.

The protein resides in the nucleus. Functionally, component of the SRB8-11 complex. The SRB8-11 complex is a regulatory module of the Mediator complex which is itself involved in regulation of basal and activated RNA polymerase II-dependent transcription. The SRB8-11 complex may be involved in the transcriptional repression of a subset of genes regulated by Mediator. It may inhibit the association of the Mediator complex with RNA polymerase II to form the holoenzyme complex. The SRB8-11 complex phosphorylates the C-terminal domain (CTD) of the largest subunit of RNA polymerase II RPB1 at serines 2 and 5. The SSN3/SRB10 and SSN8/SRB11 kinase-cyclin pair may also positively and negatively regulate numerous transcriptional activators in response to changes in nutritional and physiological conditions. The chain is RNA polymerase II holoenzyme cyclin-like subunit (SSN8) from Saccharomyces cerevisiae (strain ATCC 204508 / S288c) (Baker's yeast).